The primary structure comprises 508 residues: DNA-directed RNA polymerase subunit Rpo1C (508 aa).

The interval 1–123 (MIIWKDTAKN…REKYEYEKKV (123 aa)) is unknown. Residues 124 to 508 (SSQVLDVIAE…IYKGYPKTKK (385 aa)) are DNA-directed RNA polymerase subunit Rpo1C.

This sequence belongs to the RNA polymerase beta' chain family. As to quaternary structure, part of the RNA polymerase complex.

Its subcellular location is the cytoplasm. The enzyme catalyses RNA(n) + a ribonucleoside 5'-triphosphate = RNA(n+1) + diphosphate. Functionally, DNA-dependent RNA polymerase (RNAP) catalyzes the transcription of DNA into RNA using the four ribonucleoside triphosphates as substrates. Forms part of the jaw domain. The polypeptide is DNA-directed RNA polymerase subunit Rpo1C (Thermoplasma volcanium (strain ATCC 51530 / DSM 4299 / JCM 9571 / NBRC 15438 / GSS1)).